A 134-amino-acid polypeptide reads, in one-letter code: Beta-synuclein (134 aa).

A run of 2 repeats spans residues 20 to 30 (EKTKQGVTEAA) and 31 to 41 (EKTKEGVLYVG). Positions 20–67 (EKTKQGVTEAAEKTKEGVLYVGSKTKEGVVQGVASVAEKTKEQASHLG) are 4 X 11 AA tandem repeats of [EGS]-K-T-K-[EQ]-[GQ]-V-X(4). A 3; approximate repeat occupies 42-56 (SKTKEGVVQGVASVA). Residues 57-67 (EKTKEQASHLG) form repeat 4. A disordered region spans residues 97–134 (EVAQEAAEEPLIEPLMEPEGESYEEQPQEEYQEYEPEA). Positions 98 to 134 (VAQEAAEEPLIEPLMEPEGESYEEQPQEEYQEYEPEA) are enriched in acidic residues. Position 118 is a phosphoserine; by BARK1, CK2 and GRK5 (serine 118).

It belongs to the synuclein family. In terms of processing, phosphorylated. Phosphorylation by G-protein coupled receptor kinases (GRK) is more efficient than phosphorylation by CK1, CK2 and CaM-kinase II. As to expression, specifically present in synapses around neurons but not in glial cells.

It is found in the cytoplasm. In terms of biological role, may be involved in neuronal plasticity. The polypeptide is Beta-synuclein (SNCB) (Bos taurus (Bovine)).